The chain runs to 950 residues: Protocadherin alpha-8 (950 aa).

A signal peptide spans 1-29; sequence MVYHWRGDLGSWRLLLLLLLLAAWKVGSG. 6 Cadherin domains span residues 30–133, 157–242, 243–350, 351–455, 456–565, and 581–678; these read QLHY…PPVF, ASDA…APNF, EQSE…VPEI, ALTS…APAF, AQPE…APAL, and VPRS…APKA. Topologically, residues 30–697 are extracellular; sequence QLHYSVPEEA…GPEAALVDVN (668 aa). 2 N-linked (GlcNAc...) asparagine glycosylation sites follow: Asn257 and Asn265. An N-linked (GlcNAc...) asparagine glycan is attached at Asn548. A helical transmembrane segment spans residues 698-718; that stretch reads VYLIIAICAVSSLLVLTLLLY. Residues 719-950 are Cytoplasmic-facing; that stretch reads TALRCSALPT…GNSTTDNSDQ (232 aa). PXXP repeat units lie at residues 774–777, 799–802, 832–835, 873–876, and 891–894; these read PCLP, PRQP, PGGP, PGNP, and PGSP. A 5 X 4 AA repeats of P-X-X-P region spans residues 774–894; the sequence is PCLPPDLGSV…PDKFIIPGSP (121 aa). The tract at residues 831 to 950 is disordered; it reads GPGGPDQQWP…GNSTTDNSDQ (120 aa). Residues 909–923 are compositionally biased toward basic and acidic residues; that stretch reads DKSDFITFGKKEETK.

It localises to the cell membrane. Its function is as follows. Potential calcium-dependent cell-adhesion protein. May be involved in the establishment and maintenance of specific neuronal connections in the brain. In Pan troglodytes (Chimpanzee), this protein is Protocadherin alpha-8 (PCDHA8).